The following is a 627-amino-acid chain: MAAEKQVPGGGGGGGSGGGGGSGGGGSGGGRGAGGEENKENERPSAGSKANKEFGDSLSLEILQIIKESQQQHGLRHGDFQRYRGYCSRRQRRLRKTLNFKMGNRHKFTGKKVTEELLTDNRYLLLVLMDAERAWSYAMQLKQEANTEPRKRFHLLSRLRKAVKHAEELERLCESNRVDAKTKLEAQAYTAYLSGMLRFEHQEWKAAIEAFNKCKTIYEKLASAFTEEQAVLYNQRVEEISPNIRYCAYNIGDQSAINELMQMRLRSGGTEGLLAEKLEALITQTRAKQAATMSEVEWRGRTVPVKIDKVRIFLLGLADNEAAIVQAESEETKERLFESMLSECRDAIQVVREELKPDQKQRDYILEGEPGKVSNLQYLHSYLTYIKLSTAIKRNENMAKGLQRALLQQQPEDDSKRSPRPQDLIRLYDIILQNLVELLQLPGLEEDKAFQKEIGLKTLVFKAYRCFFIAQSYVLVKKWSEALVLYDRVLKYANEVNSDAGAFKNSLKDLPDVQELITQVRSEKCSLQAAAILDANDAHQTETSSSQVKDNKPLVERFETFCLDPSLVTKQANLVHFPPGFQPIPCKPLFFDLALNHVAFPPLEDKLEQKTKSGLTGYIKGIFGFRS.

Positions 1–53 (MAAEKQVPGGGGGGGSGGGGGSGGGGSGGGRGAGGEENKENERPSAGSKANKE) are disordered. Residues 8–33 (PGGGGGGGSGGGGGSGGGGSGGGRGA) show a composition bias toward gly residues. Positions 34 to 43 (GGEENKENER) are enriched in basic and acidic residues. Residues serine 48 and serine 241 each carry the phosphoserine modification. The RNA-binding stretch occupies residues 52–252 (KEFGDSLSLE…NIRYCAYNIG (201 aa)). The residue at position 452 (lysine 452) is an N6-acetyllysine. A required for interaction with SRP72 region spans residues 588-610 (PLFFDLALNHVAFPPLEDKLEQK).

It belongs to the SRP68 family. As to quaternary structure, heterodimer with SRP72. SRP68/SRP72 heterodimer formation is stabilized by the presence of 7SL RNA. Component of a signal recognition particle (SRP) complex that consists of a 7SL RNA molecule of 300 nucleotides and six protein subunits: SRP72, SRP68, SRP54, SRP19, SRP14 and SRP9. Within the SRP complex, interacts (via C-terminus) with SRP72 (via N-terminus).

The protein localises to the cytoplasm. Its subcellular location is the nucleus. The protein resides in the nucleolus. It localises to the endoplasmic reticulum. Functionally, component of the signal recognition particle (SRP) complex, a ribonucleoprotein complex that mediates the cotranslational targeting of secretory and membrane proteins to the endoplasmic reticulum (ER). The SRP complex interacts with the signal sequence in nascent secretory and membrane proteins and directs them to the membrane of the ER. The SRP complex targets the ribosome-nascent chain complex to the SRP receptor (SR), which is anchored in the ER, where SR compaction and GTPase rearrangement drive cotranslational protein translocation into the ER. Binds the signal recognition particle RNA (7SL RNA), SRP72 binds to this complex subsequently. The SRP complex possibly participates in the elongation arrest function. The chain is Signal recognition particle subunit SRP68 (SRP68) from Homo sapiens (Human).